Reading from the N-terminus, the 720-residue chain is 1-deoxy-D-xylulose-5-phosphate synthase 1, chloroplastic (720 aa).

The N-terminal 51 residues, 1 to 51 (MALTTFSISRGGFVGALPQEGHFAPAAAELSLHKLQSRPHKARRRSSSSIS), are a transit peptide targeting the chloroplast. The span at 35-46 (LQSRPHKARRRS) shows a compositional bias: basic residues. The tract at residues 35 to 74 (LQSRPHKARRRSSSSISASLSTEREAAEYHSQRPPTPLLD) is disordered. Residues 56 to 65 (TEREAAEYHS) show a composition bias toward basic and acidic residues. Residues His-142 and 183–185 (GHS) each bind thiamine diphosphate. Residue Asp-214 coordinates Mg(2+). Residues 215–216 (GA), Asn-243, Tyr-364, and Glu-446 each bind thiamine diphosphate. Asn-243 is a binding site for Mg(2+).

This sequence belongs to the transketolase family. DXPS subfamily. As to quaternary structure, homodimer. It depends on Mg(2+) as a cofactor. Thiamine diphosphate is required as a cofactor.

The protein resides in the plastid. It is found in the chloroplast stroma. The enzyme catalyses D-glyceraldehyde 3-phosphate + pyruvate + H(+) = 1-deoxy-D-xylulose 5-phosphate + CO2. It participates in metabolic intermediate biosynthesis; 1-deoxy-D-xylulose 5-phosphate biosynthesis; 1-deoxy-D-xylulose 5-phosphate from D-glyceraldehyde 3-phosphate and pyruvate: step 1/1. Functionally, catalyzes the acyloin condensation reaction between C atoms 2 and 3 of pyruvate and glyceraldehyde 3-phosphate to yield 1-deoxy-D-xylulose-5-phosphate (DXP). Is a limiting enzyme for plastidic isoprenoid biosynthesis and essential for chloroplast development. The polypeptide is 1-deoxy-D-xylulose-5-phosphate synthase 1, chloroplastic (CLA1) (Oryza sativa subsp. japonica (Rice)).